A 436-amino-acid chain; its full sequence is Histidinol dehydrogenase (436 aa).

NAD(+) is bound by residues Tyr-135, Gln-197, and Asn-220. Substrate-binding residues include Thr-243, Gln-265, and His-268. Zn(2+)-binding residues include Gln-265 and His-268. Residues Glu-334 and His-335 each act as proton acceptor in the active site. Residues His-335, Asp-368, Glu-422, and His-427 each coordinate substrate. Asp-368 contacts Zn(2+). His-427 is a binding site for Zn(2+).

Belongs to the histidinol dehydrogenase family. The cofactor is Zn(2+).

The enzyme catalyses L-histidinol + 2 NAD(+) + H2O = L-histidine + 2 NADH + 3 H(+). It functions in the pathway amino-acid biosynthesis; L-histidine biosynthesis; L-histidine from 5-phospho-alpha-D-ribose 1-diphosphate: step 9/9. Catalyzes the sequential NAD-dependent oxidations of L-histidinol to L-histidinaldehyde and then to L-histidine. In Deinococcus radiodurans (strain ATCC 13939 / DSM 20539 / JCM 16871 / CCUG 27074 / LMG 4051 / NBRC 15346 / NCIMB 9279 / VKM B-1422 / R1), this protein is Histidinol dehydrogenase.